Consider the following 838-residue polypeptide: E3 ubiquitin-protein ligase RNF19A (838 aa).

Positions 128–351 are TRIAD supradomain; sequence DFIECPLCLL…LSPSGCTFWG (224 aa). Residues Cys-132, Cys-135, Cys-150, His-152, Cys-155, Cys-158, Cys-176, Cys-179, Cys-219, Cys-224, Cys-241, Cys-246, Cys-251, Cys-254, His-259, Cys-264, Cys-301, and Cys-304 each coordinate Zn(2+). An RING-type 1 zinc finger spans residues 132–179; it reads CPLCLLRHSKDRFPEIMTCHHRSCVDCLRQYLRIEISESRVNISCPEC. The segment at 199-264 adopts an IBR-type zinc-finger fold; it reads EKYEEFMLRR…KQIWHPNQTC (66 aa). The segment at 301–332 adopts an RING-type 2; atypical zinc-finger fold; the sequence is CPRCAAYIIKMNDGSCNHMTCAVCGCEFCWLC. The active site involves Cys-316. 6 residues coordinate Zn(2+): Cys-321, Cys-324, Cys-329, Cys-332, His-340, and Cys-347. 2 helical membrane passes run 368 to 388 and 424 to 444; these read LVGA…AMII and VIVS…IMLA. 2 disordered regions span residues 622-685 and 700-721; these read SKPS…SNMK and QQST…PSVA. The residue at position 631 (Ser-631) is a Phosphoserine. Low complexity predominate over residues 631–644; that stretch reads SGSSSVDDGSAARS. The tract at residues 660–838 is interaction with CASR; sequence ATKWSKEATA…ELKVAIQTDI (179 aa). Over residues 671–683 the composition is skewed to basic residues; that stretch reads KKSKSGKLRKKSN. A compositionally biased stretch (polar residues) spans 700–717; sequence QQSTNSSEFEAPSLSDSM.

Belongs to the RBR family. RNF19 subfamily. Interacts with UBE2L3 and UBE2L6. Also interacts with transcription factor Sp1. Interacts with SNCAIP, CASR and VCP.

The protein localises to the membrane. The protein resides in the cytoplasm. Its subcellular location is the cytoskeleton. It is found in the microtubule organizing center. It localises to the centrosome. The enzyme catalyses [E2 ubiquitin-conjugating enzyme]-S-ubiquitinyl-L-cysteine + [acceptor protein]-L-lysine = [E2 ubiquitin-conjugating enzyme]-L-cysteine + [acceptor protein]-N(6)-ubiquitinyl-L-lysine.. Its pathway is protein modification; protein ubiquitination. Its function is as follows. E3 ubiquitin-protein ligase which accepts ubiquitin from E2 ubiquitin-conjugating enzymes UBE2L3 and UBE2L6 in the form of a thioester and then directly transfers the ubiquitin to targeted substrates, such as SNCAIP or CASR. In Sus scrofa (Pig), this protein is E3 ubiquitin-protein ligase RNF19A (RNF19A).